Reading from the N-terminus, the 358-residue chain is Sulfate/thiosulfate import ATP-binding protein CysA (358 aa).

The 235-residue stretch at 3-237 folds into the ABC transporter domain; it reads IKIENLEKHF…PQTPFVTQFV (235 aa). 35-42 is a binding site for ATP; the sequence is GPSGCGKT.

The protein belongs to the ABC transporter superfamily. Sulfate/tungstate importer (TC 3.A.1.6) family. The complex is composed of two ATP-binding proteins (CysA), two transmembrane proteins (CysT and CysW) and a solute-binding protein (CysP).

The protein resides in the cell inner membrane. It catalyses the reaction sulfate(out) + ATP + H2O = sulfate(in) + ADP + phosphate + H(+). The enzyme catalyses thiosulfate(out) + ATP + H2O = thiosulfate(in) + ADP + phosphate + H(+). Part of the ABC transporter complex CysAWTP involved in sulfate/thiosulfate import. Responsible for energy coupling to the transport system. The chain is Sulfate/thiosulfate import ATP-binding protein CysA from Mannheimia succiniciproducens (strain KCTC 0769BP / MBEL55E).